The primary structure comprises 197 residues: Peptide deformylase (197 aa).

Fe cation is bound by residues Cys-106 and His-148. The active site involves Glu-149. His-152 contacts Fe cation.

The protein belongs to the polypeptide deformylase family. Fe(2+) is required as a cofactor.

It carries out the reaction N-terminal N-formyl-L-methionyl-[peptide] + H2O = N-terminal L-methionyl-[peptide] + formate. In terms of biological role, removes the formyl group from the N-terminal Met of newly synthesized proteins. Requires at least a dipeptide for an efficient rate of reaction. N-terminal L-methionine is a prerequisite for activity but the enzyme has broad specificity at other positions. This chain is Peptide deformylase, found in Mycobacterium marinum (strain ATCC BAA-535 / M).